Reading from the N-terminus, the 250-residue chain is Probable transcriptional regulatory protein Mmc1_0479 (250 aa).

This sequence belongs to the TACO1 family.

It is found in the cytoplasm. The sequence is that of Probable transcriptional regulatory protein Mmc1_0479 from Magnetococcus marinus (strain ATCC BAA-1437 / JCM 17883 / MC-1).